The sequence spans 141 residues: ATP synthase epsilon chain (141 aa).

The protein belongs to the ATPase epsilon chain family. In terms of assembly, F-type ATPases have 2 components, CF(1) - the catalytic core - and CF(0) - the membrane proton channel. CF(1) has five subunits: alpha(3), beta(3), gamma(1), delta(1), epsilon(1). CF(0) has three main subunits: a, b and c.

Its subcellular location is the cell inner membrane. In terms of biological role, produces ATP from ADP in the presence of a proton gradient across the membrane. This chain is ATP synthase epsilon chain, found in Desulfatibacillum aliphaticivorans.